A 227-amino-acid polypeptide reads, in one-letter code: Chalcone--flavanone isomerase (227 aa).

3 residues coordinate substrate: Thr-50, Asn-115, and Ser-192.

Belongs to the chalcone isomerase family. Fibers.

The catalysed reaction is a chalcone = a flavanone.. It functions in the pathway secondary metabolite biosynthesis; flavonoid biosynthesis. In terms of biological role, catalyzes the intramolecular cyclization of bicyclic chalcones into tricyclic (S)-flavanones. Responsible for the isomerization of 4,2',4',6'-tetrahydroxychalcone (also termed chalcone) into naringenin. The protein is Chalcone--flavanone isomerase (CHI) of Gossypium hirsutum (Upland cotton).